The following is a 357-amino-acid chain: Protein-glutamate methylesterase/protein-glutamine glutaminase (357 aa).

The region spanning 3-120 (RVLVVDDSAF…SIDLYKVRDM (118 aa)) is the Response regulatory domain. Position 54 is a 4-aspartylphosphate (aspartate 54). Positions 161 to 355 (FRAGKQLICI…AAIMTYMKKE (195 aa)) constitute a CheB-type methylesterase domain. Residues serine 173, histidine 200, and aspartate 296 contribute to the active site.

It belongs to the CheB family. Phosphorylated by CheA. Phosphorylation of the N-terminal regulatory domain activates the methylesterase activity.

Its subcellular location is the cytoplasm. It catalyses the reaction [protein]-L-glutamate 5-O-methyl ester + H2O = L-glutamyl-[protein] + methanol + H(+). The enzyme catalyses L-glutaminyl-[protein] + H2O = L-glutamyl-[protein] + NH4(+). In terms of biological role, involved in chemotaxis. Part of a chemotaxis signal transduction system that modulates chemotaxis in response to various stimuli. Catalyzes the demethylation of specific methylglutamate residues introduced into the chemoreceptors (methyl-accepting chemotaxis proteins or MCP) by CheR. Also mediates the irreversible deamidation of specific glutamine residues to glutamic acid. This is Protein-glutamate methylesterase/protein-glutamine glutaminase from Bacillus licheniformis (strain ATCC 14580 / DSM 13 / JCM 2505 / CCUG 7422 / NBRC 12200 / NCIMB 9375 / NCTC 10341 / NRRL NRS-1264 / Gibson 46).